Consider the following 145-residue polypeptide: Small ribosomal subunit protein uS19 (145 aa).

The residue at position 2 (Ala2) is an N-acetylalanine. Residue Lys108 forms a Glycyl lysine isopeptide (Lys-Gly) (interchain with G-Cter in SUMO2) linkage.

This sequence belongs to the universal ribosomal protein uS19 family. Component of the small ribosomal subunit.

Its subcellular location is the cytoplasm. Component of the small ribosomal subunit. The ribosome is a large ribonucleoprotein complex responsible for the synthesis of proteins in the cell. The chain is Small ribosomal subunit protein uS19 (RPS15) from Mesocricetus auratus (Golden hamster).